We begin with the raw amino-acid sequence, 390 residues long: Methionyl-tRNA formyltransferase, mitochondrial (390 aa).

The N-terminal 33 residues, 1–33 (MRVLLRCCCGHLPVGGGAGRRSNPRWRALARLS), are a transit peptide targeting the mitochondrion.

This sequence belongs to the Fmt family.

It is found in the mitochondrion. It carries out the reaction L-methionyl-tRNA(fMet) + (6R)-10-formyltetrahydrofolate = N-formyl-L-methionyl-tRNA(fMet) + (6S)-5,6,7,8-tetrahydrofolate + H(+). In terms of biological role, methionyl-tRNA formyltransferase that formylates methionyl-tRNA in mitochondria and is crucial for translation initiation. The protein is Methionyl-tRNA formyltransferase, mitochondrial (MTFMT) of Bos taurus (Bovine).